A 100-amino-acid polypeptide reads, in one-letter code: Aspartyl/glutamyl-tRNA(Asn/Gln) amidotransferase subunit C (100 aa).

This sequence belongs to the GatC family. Heterotrimer of A, B and C subunits.

It carries out the reaction L-glutamyl-tRNA(Gln) + L-glutamine + ATP + H2O = L-glutaminyl-tRNA(Gln) + L-glutamate + ADP + phosphate + H(+). The enzyme catalyses L-aspartyl-tRNA(Asn) + L-glutamine + ATP + H2O = L-asparaginyl-tRNA(Asn) + L-glutamate + ADP + phosphate + 2 H(+). Its function is as follows. Allows the formation of correctly charged Asn-tRNA(Asn) or Gln-tRNA(Gln) through the transamidation of misacylated Asp-tRNA(Asn) or Glu-tRNA(Gln) in organisms which lack either or both of asparaginyl-tRNA or glutaminyl-tRNA synthetases. The reaction takes place in the presence of glutamine and ATP through an activated phospho-Asp-tRNA(Asn) or phospho-Glu-tRNA(Gln). This Staphylococcus carnosus (strain TM300) protein is Aspartyl/glutamyl-tRNA(Asn/Gln) amidotransferase subunit C.